Reading from the N-terminus, the 1210-residue chain is Ice nucleation protein (1210 aa).

Residues 165–1156 (AVYGSTLTGA…LSGGENSTLI (992 aa)) form an octapeptide periodicity region.

This sequence belongs to the bacterial ice nucleation protein family.

It is found in the cell outer membrane. Ice nucleation proteins enable bacteria to nucleate crystallization in supercooled water. This chain is Ice nucleation protein (inaW), found in Pseudomonas fluorescens.